The sequence spans 616 residues: MALLHIAEPGLSAAPHQQKWAVGIDLGTTNSLVAVVRSGVAETLKDEQGRDILPSVVRYLPDGLQIGAEAKHAAAEDPLNTIQSVKRFMGKALSDITQTNLPYQFTGADKGLVHINTCQGEVNPVQVSAEILKALQLRATEALGAELDGVVITVPAYFNDAQRQATKDAARLAGMHVLRLLNEPTAAAVAYGLDSGQEGVIAVYDLGGGTFDISILRLHQGVFEVMATGGDSALGGDDFDHLLADWIAEQADLIAPFTPRVQRQLLDLACDVKQQLSSQDTVAVSFAQWSGSIDRTQFEDLITPLVKKTLMSCRRAIKDAGVEADEVLEVVMVGGSTRVPLVRQLVGDFFGRTPLTSIDPDKVVAVGAAIQADILVGNKPESEMLLLDVIPLSLGLETMGGLVEKIIPRNTTIPAARAQDFTTFKDGQTAMMIHVLQGERELVSDCRSLARFVLKGIPPLAAGAAHIRVTFQVDADGLLSVSAMEKSTGVQAAIEVKPSYGLQEEDMLRMLRESVEFAEKDIKARMLVEQKVEADRVLESLRQALSKDGDALLSPEERSVINDAIQNLVNIQQGDDTDAIKAAITALDEATSEFAARRMDSSIRQALQGHKIDEVN.

It belongs to the heat shock protein 70 family.

Functionally, chaperone involved in the maturation of iron-sulfur cluster-containing proteins. Has a low intrinsic ATPase activity which is markedly stimulated by HscB. The polypeptide is Chaperone protein HscA homolog (Tolumonas auensis (strain DSM 9187 / NBRC 110442 / TA 4)).